The sequence spans 159 residues: Protein E6 (159 aa).

2 zinc fingers span residues 35–71 and 108–144; these read CVYCRRALSDADVLAFAIKELSVVWRKGFPFGACGKC and CYICHKPLSWEEKEALLVGNKRFHNISGRWTGHCMQC.

It belongs to the papillomaviridae E6 protein family. Forms homodimers. Interacts with ubiquitin-protein ligase UBE3A/E6-AP; this interaction stimulates UBE3A ubiquitin activity. Interacts with host TP53 and EP300; this interaction inhibits TP53 activity.

Its subcellular location is the host cytoplasm. It localises to the host nucleus. In terms of biological role, plays a major role in the induction and maintenance of cellular transformation. E6 associates with host UBE3A/E6-AP ubiquitin-protein ligase and modulates its activity. Sequesters tumor suppressor TP53 in the host cytoplasm and modulates its activity by interacting with host EP300 that results in the reduction of TP53 acetylation and activation. In turn, apoptosis induced by DNA damage is inhibited. E6 also protects host keratinocytes from apoptosis by mediating the degradation of host BAK1. May also inhibit host immune response. This chain is Protein E6, found in Homo sapiens (Human).